A 278-amino-acid polypeptide reads, in one-letter code: Pca operon regulatory protein (278 aa).

Positions 31–91 (VAGISKGMAI…SDGHYFYLTP (61 aa)) constitute an HTH iclR-type domain. Residues 53-72 (ITMAAEKTGMTRAAARRHLL) constitute a DNA-binding region (H-T-H motif). Residues 106–278 (LPKISQPLLN…ETARELRNIL (173 aa)) form the IclR-ED domain.

Functionally, activates transcription of the pca operon. The protein is Pca operon regulatory protein (pcaU) of Acinetobacter baylyi (strain ATCC 33305 / BD413 / ADP1).